Reading from the N-terminus, the 188-residue chain is Elongation factor P-like protein (188 aa).

The protein belongs to the elongation factor P family.

This chain is Elongation factor P-like protein, found in Saccharophagus degradans (strain 2-40 / ATCC 43961 / DSM 17024).